The following is a 168-amino-acid chain: MATVASSAAVAVPSFTGLKASGSIKPTTAKIIPTTTAVPRLSVKASLKNVGAAVVATAAAGLLAGNAMAVEVLLGGGDGSLAFLPGDFSVASGEEIVFKNNAGFPHNVVFDEDEIPSGVDAAKISMSEEDLLNAPGETYKVTLTEKGTYKFYCSPHQGAGMVGKVTVN.

The 99-residue stretch at 70-168 folds into the Plastocyanin-like domain; that stretch reads VEVLLGGGDG…AGMVGKVTVN (99 aa). Residues histidine 106, cysteine 153, histidine 156, and methionine 161 each coordinate Cu cation.

It belongs to the plastocyanin family. It depends on Cu(2+) as a cofactor.

It is found in the plastid. The protein resides in the chloroplast thylakoid membrane. Its function is as follows. Participates in electron transfer between P700 and the cytochrome b6-f complex in photosystem I. This chain is Plastocyanin, chloroplastic (PETE), found in Spinacia oleracea (Spinach).